The primary structure comprises 213 residues: UPF0319 protein HAPS_0727 (213 aa).

Residues 1 to 21 (MKLGKIALAMTALIAGTTAFA) form the signal peptide.

This sequence belongs to the UPF0319 family.

This chain is UPF0319 protein HAPS_0727, found in Glaesserella parasuis serovar 5 (strain SH0165) (Haemophilus parasuis).